The sequence spans 255 residues: Poxin (255 aa).

It belongs to the poxin family. Highly divergent.

It carries out the reaction 2',3'-cGAMP + H2O = Gp(2'-5')Ap(3') + H(+). In terms of biological role, nuclease that cleaves 2',3'-cGAMP. The polypeptide is Poxin (Bombyx mori (Silk moth)).